A 206-amino-acid chain; its full sequence is Peptidyl-tRNA hydrolase (206 aa).

Tyr-14 contacts tRNA. His-19 acts as the Proton acceptor in catalysis. Tyr-64, Asn-66, and Asn-112 together coordinate tRNA.

It belongs to the PTH family. As to quaternary structure, monomer.

The protein resides in the cytoplasm. The catalysed reaction is an N-acyl-L-alpha-aminoacyl-tRNA + H2O = an N-acyl-L-amino acid + a tRNA + H(+). Its function is as follows. Hydrolyzes ribosome-free peptidyl-tRNAs (with 1 or more amino acids incorporated), which drop off the ribosome during protein synthesis, or as a result of ribosome stalling. Functionally, catalyzes the release of premature peptidyl moieties from peptidyl-tRNA molecules trapped in stalled 50S ribosomal subunits, and thus maintains levels of free tRNAs and 50S ribosomes. This is Peptidyl-tRNA hydrolase from Rhodopseudomonas palustris (strain ATCC BAA-98 / CGA009).